Consider the following 185-residue polypeptide: Peptide deformylase (185 aa).

Positions 98 and 140 each coordinate Fe cation. Glutamate 141 is an active-site residue. A Fe cation-binding site is contributed by histidine 144.

The protein belongs to the polypeptide deformylase family. Requires Fe(2+) as cofactor.

The enzyme catalyses N-terminal N-formyl-L-methionyl-[peptide] + H2O = N-terminal L-methionyl-[peptide] + formate. In terms of biological role, removes the formyl group from the N-terminal Met of newly synthesized proteins. Requires at least a dipeptide for an efficient rate of reaction. N-terminal L-methionine is a prerequisite for activity but the enzyme has broad specificity at other positions. The protein is Peptide deformylase of Parabacteroides distasonis (strain ATCC 8503 / DSM 20701 / CIP 104284 / JCM 5825 / NCTC 11152).